The sequence spans 91 residues: Small ribosomal subunit protein bS18 (91 aa).

It belongs to the bacterial ribosomal protein bS18 family. As to quaternary structure, part of the 30S ribosomal subunit. Forms a tight heterodimer with protein bS6.

Binds as a heterodimer with protein bS6 to the central domain of the 16S rRNA, where it helps stabilize the platform of the 30S subunit. The protein is Small ribosomal subunit protein bS18 of Gluconacetobacter diazotrophicus (strain ATCC 49037 / DSM 5601 / CCUG 37298 / CIP 103539 / LMG 7603 / PAl5).